Reading from the N-terminus, the 739-residue chain is Phosphoribosylformylglycinamidine synthase subunit PurL (739 aa).

Histidine 54 is an active-site residue. ATP contacts are provided by tyrosine 57 and lysine 96. Glutamate 98 contacts Mg(2+). Substrate-binding positions include 99-102 (SHNH) and arginine 121. Catalysis depends on histidine 100, which acts as the Proton acceptor. Residue aspartate 122 participates in Mg(2+) binding. Glutamine 245 is a binding site for substrate. Aspartate 273 serves as a coordination point for Mg(2+). A substrate-binding site is contributed by 317–319 (ESQ). Positions 500 and 537 each coordinate ATP. Asparagine 538 serves as a coordination point for Mg(2+). Residue serine 540 coordinates substrate.

Belongs to the FGAMS family. In terms of assembly, monomer. Part of the FGAM synthase complex composed of 1 PurL, 1 PurQ and 2 PurS subunits.

The protein resides in the cytoplasm. It carries out the reaction N(2)-formyl-N(1)-(5-phospho-beta-D-ribosyl)glycinamide + L-glutamine + ATP + H2O = 2-formamido-N(1)-(5-O-phospho-beta-D-ribosyl)acetamidine + L-glutamate + ADP + phosphate + H(+). It functions in the pathway purine metabolism; IMP biosynthesis via de novo pathway; 5-amino-1-(5-phospho-D-ribosyl)imidazole from N(2)-formyl-N(1)-(5-phospho-D-ribosyl)glycinamide: step 1/2. Functionally, part of the phosphoribosylformylglycinamidine synthase complex involved in the purines biosynthetic pathway. Catalyzes the ATP-dependent conversion of formylglycinamide ribonucleotide (FGAR) and glutamine to yield formylglycinamidine ribonucleotide (FGAM) and glutamate. The FGAM synthase complex is composed of three subunits. PurQ produces an ammonia molecule by converting glutamine to glutamate. PurL transfers the ammonia molecule to FGAR to form FGAM in an ATP-dependent manner. PurS interacts with PurQ and PurL and is thought to assist in the transfer of the ammonia molecule from PurQ to PurL. The chain is Phosphoribosylformylglycinamidine synthase subunit PurL from Bacillus cereus (strain G9842).